Consider the following 405-residue polypeptide: Argininosuccinate synthase (405 aa).

11-19 (AYSGGLDTS) is a binding site for ATP. Residue Tyr-90 coordinates L-citrulline. Position 119 (Gly-119) interacts with ATP. Positions 121, 125, and 126 each coordinate L-aspartate. Asn-125 contacts L-citrulline. Arg-129, Ser-178, Ser-187, Glu-263, and Tyr-275 together coordinate L-citrulline.

This sequence belongs to the argininosuccinate synthase family. Type 1 subfamily. In terms of assembly, homotetramer.

It localises to the cytoplasm. It carries out the reaction L-citrulline + L-aspartate + ATP = 2-(N(omega)-L-arginino)succinate + AMP + diphosphate + H(+). Its pathway is amino-acid biosynthesis; L-arginine biosynthesis; L-arginine from L-ornithine and carbamoyl phosphate: step 2/3. The polypeptide is Argininosuccinate synthase (Legionella pneumophila (strain Paris)).